We begin with the raw amino-acid sequence, 87 residues long: Small ribosomal subunit protein bS20 (87 aa).

The disordered stretch occupies residues 1–25; that stretch reads MANTAQARKRARQSVQRNKHNSSLR. The segment covering 7 to 22 has biased composition (basic residues); it reads ARKRARQSVQRNKHNS.

Belongs to the bacterial ribosomal protein bS20 family.

Its function is as follows. Binds directly to 16S ribosomal RNA. This Bordetella bronchiseptica (strain ATCC BAA-588 / NCTC 13252 / RB50) (Alcaligenes bronchisepticus) protein is Small ribosomal subunit protein bS20.